We begin with the raw amino-acid sequence, 210 residues long: uncharacterized protein (210 aa).

The Fe2OG dioxygenase domain maps to 90 to 193; that stretch reads KPDQIIVNEY…RISITFRNVI (104 aa).

This is an uncharacterized protein from Acanthamoeba polyphaga (Amoeba).